Reading from the N-terminus, the 59-residue chain is UPF0434 protein VIBHAR_01537 (59 aa).

This sequence belongs to the UPF0434 family.

In Vibrio campbellii (strain ATCC BAA-1116), this protein is UPF0434 protein VIBHAR_01537.